Consider the following 198-residue polypeptide: Clytin (198 aa).

Positions 1–9 (MADTASKYA) are excised as a propeptide. EF-hand domains lie at 20-55 (KWVN…DICA), 60-95 (TPEQ…VDGW), 119-148 (EAVF…SGIC), and 149-184 (SSDE…FWYT). 5 residues coordinate Ca(2+): D33, N35, D37, K39, and E44. The Ca(2+) site is built by D126, D128, S130, S132, E137, D162, D164, S166, K168, and E173.

This sequence belongs to the aequorin family.

Ca(2+)-dependent bioluminescence photoprotein. Displays an emission peak at 470 nm (blue light). Trace amounts of calcium ion trigger the intramolecular oxidation of the chromophore, coelenterazine into coelenteramide and CO(2) with the concomitant emission of light. The sequence is that of Clytin from Clytia gregaria (Gregarious jellyfish).